The chain runs to 213 residues: Flagellin A1 (213 aa).

The propeptide occupies 1 to 10; that stretch reads MFENINEDRG. N-linked (GlcNAc...) asparagine glycosylation is found at Asn-70, Asn-115, and Asn-172.

It belongs to the archaeal flagellin family. In terms of processing, glycosylated by a pentasaccharide similar to the S-layer glycoprotein, probably comprising a hexose, 2 hexuronic acids, a methyl ester of a hexuronic acid and mannose. Glycosylation is required for biosynthesis of stable flagella.

The protein resides in the archaeal flagellum. Functionally, major flagellin required for motility. Not involved in PibD-dependent surface adhesion. Much more abundant in cells compared to FlgA2. In Haloferax volcanii (strain ATCC 29605 / DSM 3757 / JCM 8879 / NBRC 14742 / NCIMB 2012 / VKM B-1768 / DS2) (Halobacterium volcanii), this protein is Flagellin A1 (flgA1).